The sequence spans 448 residues: tRNA-2-methylthio-N(6)-dimethylallyladenosine synthase (448 aa).

The region spanning 3-120 (KKLFIKTHGC…LPTMLDSRQG (118 aa)) is the MTTase N-terminal domain. [4Fe-4S] cluster contacts are provided by C12, C49, C83, C158, C162, and C165. The 233-residue stretch at 144-376 (TSDGATAFVS…QERLNQQTMQ (233 aa)) folds into the Radical SAM core domain. One can recognise a TRAM domain in the interval 379 to 444 (RRMVGNTERI…PNSLRGDLAS (66 aa)).

Belongs to the methylthiotransferase family. MiaB subfamily. In terms of assembly, monomer. Requires [4Fe-4S] cluster as cofactor.

The protein resides in the cytoplasm. The enzyme catalyses N(6)-dimethylallyladenosine(37) in tRNA + (sulfur carrier)-SH + AH2 + 2 S-adenosyl-L-methionine = 2-methylsulfanyl-N(6)-dimethylallyladenosine(37) in tRNA + (sulfur carrier)-H + 5'-deoxyadenosine + L-methionine + A + S-adenosyl-L-homocysteine + 2 H(+). In terms of biological role, catalyzes the methylthiolation of N6-(dimethylallyl)adenosine (i(6)A), leading to the formation of 2-methylthio-N6-(dimethylallyl)adenosine (ms(2)i(6)A) at position 37 in tRNAs that read codons beginning with uridine. The chain is tRNA-2-methylthio-N(6)-dimethylallyladenosine synthase from Chromohalobacter salexigens (strain ATCC BAA-138 / DSM 3043 / CIP 106854 / NCIMB 13768 / 1H11).